The chain runs to 371 residues: Deoxyuridine 5'-triphosphate nucleotidohydrolase (371 aa).

Residues 260–262 (RSS) and 366–367 (FG) each bind substrate. A disordered region spans residues 350–371 (NEFDAEAPPSERGTGGFGSTGI). The span at 362–371 (GTGGFGSTGI) shows a compositional bias: gly residues.

Belongs to the dUTPase family. Mg(2+) is required as a cofactor.

The catalysed reaction is dUTP + H2O = dUMP + diphosphate + H(+). Functionally, involved in nucleotide metabolism: produces dUMP, the immediate precursor of thymidine nucleotides and decreases the intracellular concentration of dUTP to avoid uracil incorporation into viral DNA. This Homo sapiens (Human) protein is Deoxyuridine 5'-triphosphate nucleotidohydrolase.